The sequence spans 362 residues: Nicotinate-nucleotide--dimethylbenzimidazole phosphoribosyltransferase (362 aa).

Residue Glu321 is the Proton acceptor of the active site.

It belongs to the CobT family.

It carries out the reaction 5,6-dimethylbenzimidazole + nicotinate beta-D-ribonucleotide = alpha-ribazole 5'-phosphate + nicotinate + H(+). It participates in nucleoside biosynthesis; alpha-ribazole biosynthesis; alpha-ribazole from 5,6-dimethylbenzimidazole: step 1/2. Functionally, catalyzes the synthesis of alpha-ribazole-5'-phosphate from nicotinate mononucleotide (NAMN) and 5,6-dimethylbenzimidazole (DMB). This Clostridium tetani (strain Massachusetts / E88) protein is Nicotinate-nucleotide--dimethylbenzimidazole phosphoribosyltransferase.